A 28-amino-acid polypeptide reads, in one-letter code: M-poneritoxin-Da4b (28 aa).

Position 28 is an alanine amide (alanine 28).

In terms of tissue distribution, expressed by the venom gland.

Its subcellular location is the secreted. Its function is as follows. The synthetic peptide has antimicrobial activity against the Gram-positive bacteria B.amyloliquefacies S499 (MIC=0.05 mM), L.monocytogenes 2231 and S.aureus ATCC 29213, against the Gram-negative bacteria P.putida BTP1, P.aeruginosa PaO1 and E.coli ATCC 10536, and against the fungi S.cerevisiae, R.mucilaginosa and C.cucumerinum. It is not active against the fungi F.oxysporum and B.cinerea. The protein is M-poneritoxin-Da4b of Dinoponera australis (Giant neotropical hunting ant).